Here is a 382-residue protein sequence, read N- to C-terminus: Membrane protein MLC1 (382 aa).

Residues 1 to 28 show a composition bias toward basic and acidic residues; the sequence is MTREGQFREELGYDRMPTLERGRQDAGR. Residues 1–43 form a disordered region; it reads MTREGQFREELGYDRMPTLERGRQDAGRQDPGSYTPDSKPKDL. The next 4 membrane-spanning stretches (helical) occupy residues 58 to 78, 88 to 107, 117 to 137, and 148 to 168; these read WVFS…SLYL, YLRC…FAVG, FQIL…WFGC, and INFN…TVII. Ser183, Ser185, and Ser188 each carry phosphoserine. 4 consecutive transmembrane segments (helical) span residues 205–225, 234–254, 263–283, and 309–329; these read SVVE…ALNV, LSVT…ASHV, LVEV…TASG, and LLLL…GTAI.

In terms of assembly, interacts with ATP1B1. Part of a complex containing ATP1B1, TRPV4, AQP4 and HEPACAM.

It is found in the membrane. Its subcellular location is the cell membrane. It localises to the cytoplasm. The protein resides in the perinuclear region. The protein localises to the endoplasmic reticulum. Functionally, transmembrane protein mainly expressed in brain astrocytes that may play a role in transport across the blood-brain and brain-cerebrospinal fluid barriers. Regulates the response of astrocytes to hypo-osmosis by promoting calcium influx. May function as regulatory protein of membrane protein complexes such as ion channels. This chain is Membrane protein MLC1, found in Mus musculus (Mouse).